The chain runs to 126 residues: DNA-directed RNA polymerase 35 kDa subunit (126 aa).

It belongs to the poxviridae DNA-directed RNA polymerase 35 kDa subunit family. As to quaternary structure, the DNA-dependent RNA polymerase used for intermediate and late genes expression consists of eight subunits 147 kDa, 133 kDa, 35 kDa, 30 kDa, 22 kDa, 19 kDa, 18 kDa and 7 kDa totalling more than 500 kDa in mass. The same holoenzyme, with the addition of the transcription-specificity factor RAP94, is used for early gene expression.

The protein localises to the virion. It catalyses the reaction RNA(n) + a ribonucleoside 5'-triphosphate = RNA(n+1) + diphosphate. Functionally, part of the DNA-dependent RNA polymerase which catalyzes the transcription of viral DNA into RNA using the four ribonucleoside triphosphates as substrates. Responsible for the transcription of early, intermediate and late genes. DNA-dependent RNA polymerase associates with the early transcription factor (ETF) thereby allowing the early genes transcription. Late transcription, and probably also intermediate transcription, require newly synthesized RNA polymerase. In Ovis aries (Sheep), this protein is DNA-directed RNA polymerase 35 kDa subunit (RPO35).